The following is a 557-amino-acid chain: Transmembrane protein 209 (557 aa).

Residues 28-48 form a helical membrane-spanning segment; it reads VVLAWGLLNVSLAGMIYTEMT. A glycan (N-linked (GlcNAc...) asparagine) is linked at Asn57. A helical transmembrane segment spans residues 60-80; sequence YWPLWYIELALASLFSLNALF. 2 disordered regions span residues 108-156 and 194-232; these read PYSS…KFSP and YSSS…TDKE. Positions 125-140 are enriched in polar residues; sequence VPASTPSPSMQGQNVL. Low complexity-rich tracts occupy residues 141–156, 194–205, and 219–228; these read SYSP…KFSP, YSSSPGSSQYPS, and RSSPSTYSSP. N-linked (GlcNAc...) asparagine glycosylation is found at Asn273 and Asn343.

It localises to the membrane. The protein localises to the nucleus envelope. It is found in the golgi apparatus. The protein resides in the cytoplasm. This chain is Transmembrane protein 209 (tmem209), found in Xenopus tropicalis (Western clawed frog).